The chain runs to 302 residues: N-acetylmuramic acid 6-phosphate etherase (302 aa).

In terms of domain architecture, SIS spans 58–221 (IFERFKKGGR…TTTLMIKLGK (164 aa)). Glu-86 serves as the catalytic Proton donor. Glu-117 is an active-site residue.

Belongs to the GCKR-like family. MurNAc-6-P etherase subfamily. Homodimer.

It carries out the reaction N-acetyl-D-muramate 6-phosphate + H2O = N-acetyl-D-glucosamine 6-phosphate + (R)-lactate. Its pathway is amino-sugar metabolism; N-acetylmuramate degradation. Its function is as follows. Specifically catalyzes the cleavage of the D-lactyl ether substituent of MurNAc 6-phosphate, producing GlcNAc 6-phosphate and D-lactate. The polypeptide is N-acetylmuramic acid 6-phosphate etherase (Mycoplasma mycoides subsp. mycoides SC (strain CCUG 32753 / NCTC 10114 / PG1)).